Consider the following 557-residue polypeptide: MGNHKAALTKQVFTFASELYAYGVREVVISPGSRSTPLALAFEAHPNIKTWIHPDERSAAFFAVGLIKGSERPVAILCTSGTATANYTPAIAESQISRIPLIVLTSDRPHELRSVGAPQAINQVNMFNNYVSYEFDMPIADDSKETIDAIYYQMQIASQYLYGPHKGPIHFNLPFRDPLTPDLNATELLTSEMKILPHYQKSIDASALRHILNKKKGLIIVGDMQHQEVDQILTYSTIYDLPILADPLSHLRKFDHPNVICTYDLLFRSGLDLNVDFVIRVGKPVISKKLNQWLKKTDAFQILVQNNDKIDVFPIAPDISYEISANDFFRSLMEDTRVNRVSWLEKWQCIEKKGRKEIKCYLEQATDESAFVGELIKKTSEKDALFISNSMPIRDVDNLLLNKNIDVYANRGANGIDGIVSTALGMAVHKRITLLIGDLSFYHDMNGLLMSKLNNIQMNIVLLNNDGGGIFSYLPQKESATDYFERLFGTPTGLDFEYTAKLYQFDFKRFNSVSEFKNATLLSETSTIYELITNREDNFKQHQILYQKLSEMIHDTL.

It belongs to the TPP enzyme family. MenD subfamily. Homodimer. Mg(2+) is required as a cofactor. The cofactor is Mn(2+). Thiamine diphosphate serves as cofactor.

It catalyses the reaction isochorismate + 2-oxoglutarate + H(+) = 5-enolpyruvoyl-6-hydroxy-2-succinyl-cyclohex-3-ene-1-carboxylate + CO2. The protein operates within quinol/quinone metabolism; 1,4-dihydroxy-2-naphthoate biosynthesis; 1,4-dihydroxy-2-naphthoate from chorismate: step 2/7. It functions in the pathway quinol/quinone metabolism; menaquinone biosynthesis. Catalyzes the thiamine diphosphate-dependent decarboxylation of 2-oxoglutarate and the subsequent addition of the resulting succinic semialdehyde-thiamine pyrophosphate anion to isochorismate to yield 2-succinyl-5-enolpyruvyl-6-hydroxy-3-cyclohexene-1-carboxylate (SEPHCHC). This chain is 2-succinyl-5-enolpyruvyl-6-hydroxy-3-cyclohexene-1-carboxylate synthase, found in Staphylococcus aureus (strain bovine RF122 / ET3-1).